We begin with the raw amino-acid sequence, 272 residues long: Ribosomal RNA small subunit methyltransferase A (272 aa).

Residues Asn-18, Leu-20, Gly-45, Glu-66, Asp-91, and Asn-113 each coordinate S-adenosyl-L-methionine.

It belongs to the class I-like SAM-binding methyltransferase superfamily. rRNA adenine N(6)-methyltransferase family. RsmA subfamily.

The protein localises to the cytoplasm. It carries out the reaction adenosine(1518)/adenosine(1519) in 16S rRNA + 4 S-adenosyl-L-methionine = N(6)-dimethyladenosine(1518)/N(6)-dimethyladenosine(1519) in 16S rRNA + 4 S-adenosyl-L-homocysteine + 4 H(+). Specifically dimethylates two adjacent adenosines (A1518 and A1519) in the loop of a conserved hairpin near the 3'-end of 16S rRNA in the 30S particle. May play a critical role in biogenesis of 30S subunits. The chain is Ribosomal RNA small subunit methyltransferase A from Proteus mirabilis (strain HI4320).